We begin with the raw amino-acid sequence, 313 residues long: 4-diphosphocytidyl-2-C-methyl-D-erythritol kinase (313 aa).

The active site involves lysine 27. Proline 110 to serine 120 serves as a coordination point for ATP. Aspartate 152 is a catalytic residue.

It belongs to the GHMP kinase family. IspE subfamily.

The enzyme catalyses 4-CDP-2-C-methyl-D-erythritol + ATP = 4-CDP-2-C-methyl-D-erythritol 2-phosphate + ADP + H(+). Its pathway is isoprenoid biosynthesis; isopentenyl diphosphate biosynthesis via DXP pathway; isopentenyl diphosphate from 1-deoxy-D-xylulose 5-phosphate: step 3/6. Its function is as follows. Catalyzes the phosphorylation of the position 2 hydroxy group of 4-diphosphocytidyl-2C-methyl-D-erythritol. The protein is 4-diphosphocytidyl-2-C-methyl-D-erythritol kinase of Histophilus somni (strain 129Pt) (Haemophilus somnus).